Reading from the N-terminus, the 565-residue chain is SRSF protein kinase 3 (565 aa).

Residues 1 to 44 (MSANAGGSGSVDCGGSSSSSQTSCGPESSGSELTPATPAPRLLQ) form a disordered region. Low complexity predominate over residues 10-31 (SVDCGGSSSSSQTSCGPESSGS). A Phosphoserine modification is found at S49. Residues 78–563 (YHVVRKLGWG…AADCLQHPWL (486 aa)) form the Protein kinase domain. Residues 84 to 92 (LGWGHFSTV) and K107 contribute to the ATP site. The Proton acceptor role is filled by D211. The span at 236-253 (WQQSGAQPPSRSTVSTAP) shows a compositional bias: polar residues. 2 disordered regions span residues 236-280 (WQQS…KRLL) and 295-350 (AAVQ…QTSG). The span at 262–277 (SKNKRKKMRRKRKQQK) shows a compositional bias: basic residues. The span at 325–350 (AGPSPASSSPVPGGERSLSPSSQTSG) shows a compositional bias: low complexity. S328 bears the Phosphoserine mark.

Belongs to the protein kinase superfamily. CMGC Ser/Thr protein kinase family. Exclusively expressed in skeletal and heart muscle.

Its subcellular location is the nucleus. It localises to the cytoplasm. It carries out the reaction L-seryl-[protein] + ATP = O-phospho-L-seryl-[protein] + ADP + H(+). It catalyses the reaction L-threonyl-[protein] + ATP = O-phospho-L-threonyl-[protein] + ADP + H(+). In terms of biological role, serine/arginine-rich protein-specific kinase which specifically phosphorylates its substrates at serine residues located in regions rich in arginine/serine dipeptides, known as RS domains. Phosphorylates the SR splicing factor SRSF1 and the lamin-B receptor (LBR) in vitro. Required for normal muscle development. The polypeptide is SRSF protein kinase 3 (Srpk3) (Mus musculus (Mouse)).